A 264-amino-acid chain; its full sequence is MDKSLKANCIGEFLGTALLIFFGVGCVAALKVAGASFGLWEISIMWGMGVALAVYATAGLSGAHLNPAVTIALWKFACFDGKKVIPYIISQMLGAFFAAALVYALYRNVFIDYETVHNIVRGTQESLSLAGTFSTYPHPSLSIGGAFAVEFVITAILMALIMALTDDGNGVPRGPLAPLLIGILIAVIGGAMGPLTGFAMNPARDFGPKFFAYLAGWGELALTGGREIPYFIVPMVAPVLGALAGAWLYKKAIGGNLPCNCGCE.

At 1–3 the chain is on the cytoplasmic side; that stretch reads MDK. Residues 4-32 traverse the membrane as a helical segment; the sequence is SLKANCIGEFLGTALLIFFGVGCVAALKV. Topologically, residues 33 to 37 are periplasmic; the sequence is AGASF. Residues 38-58 form a helical membrane-spanning segment; it reads GLWEISIMWGMGVALAVYATA. Residues 59–61 lie on the Cytoplasmic side of the membrane; that stretch reads GLS. The stretch at 62–65 is an intramembrane region; that stretch reads GAHL. The NPA 1 signature appears at 66–68; it reads NPA. An intramembrane region (helical) is located at residues 66-76; sequence NPAVTIALWKF. The Cytoplasmic portion of the chain corresponds to 77–82; sequence ACFDGK. Residues 83–106 form a helical membrane-spanning segment; the sequence is KVIPYIISQMLGAFFAAALVYALY. At 107-141 the chain is on the periplasmic side; it reads RNVFIDYETVHNIVRGTQESLSLAGTFSTYPHPSL. A helical transmembrane segment spans residues 142 to 167; it reads SIGGAFAVEFVITAILMALIMALTDD. Over 168-175 the chain is Cytoplasmic; it reads GNGVPRGP. The helical transmembrane segment at 176–192 threads the bilayer; that stretch reads LAPLLIGILIAVIGGAM. Topologically, residues 193–196 are periplasmic; the sequence is GPLT. An intramembrane segment occupies 197 to 200; that stretch reads GFAM. The NPA 2 signature appears at 201-203; it reads NPA. The segment at residues 201 to 214 is an intramembrane region (helical); sequence NPARDFGPKFFAYL. Topologically, residues 215–229 are periplasmic; the sequence is AGWGELALTGGREIP. Residues 230–252 form a helical membrane-spanning segment; sequence YFIVPMVAPVLGALAGAWLYKKA. The Cytoplasmic portion of the chain corresponds to 253-264; the sequence is IGGNLPCNCGCE.

The protein belongs to the MIP/aquaporin (TC 1.A.8) family.

The protein localises to the cell inner membrane. It carries out the reaction glycerol(in) = glycerol(out). In terms of biological role, mediates glycerol diffusion across the cytoplasmic membrane via a pore-type mechanism. The sequence is that of Glycerol uptake facilitator protein (glpF) from Haemophilus influenzae (strain ATCC 51907 / DSM 11121 / KW20 / Rd).